The sequence spans 1723 residues: Probable outer membrane protein pmp20 (1723 aa).

An N-terminal signal peptide occupies residues 1–21 (MKWLPATAVFAAVLPALTAFG). Disordered stretches follow at residues 78-100 (VTPD…SGAT) and 139-161 (LSSS…SASA). Composition is skewed to low complexity over residues 85–100 (SSSN…SGAT) and 140–161 (SSSS…SASA). Residues 1434–1723 (EDPAFNNFWA…MANGGIRFVF (290 aa)) enclose the Autotransporter domain.

The protein belongs to the PMP outer membrane protein family.

The protein localises to the secreted. The protein resides in the cell wall. It localises to the cell outer membrane. The chain is Probable outer membrane protein pmp20 (pmp20) from Chlamydia pneumoniae (Chlamydophila pneumoniae).